The primary structure comprises 667 residues: DNA ligase (667 aa).

NAD(+) contacts are provided by residues 32–36 (DSEYD), 81–82 (SL), and Glu-110. Lys-112 (N6-AMP-lysine intermediate) is an active-site residue. Arg-133, Glu-167, Lys-283, and Lys-307 together coordinate NAD(+). Cys-401, Cys-404, Cys-419, and Cys-424 together coordinate Zn(2+). The 82-residue stretch at 586 to 667 (EGHPEFSGKT…FVDKQNELNS (82 aa)) folds into the BRCT domain.

This sequence belongs to the NAD-dependent DNA ligase family. LigA subfamily. Mg(2+) is required as a cofactor. It depends on Mn(2+) as a cofactor.

It carries out the reaction NAD(+) + (deoxyribonucleotide)n-3'-hydroxyl + 5'-phospho-(deoxyribonucleotide)m = (deoxyribonucleotide)n+m + AMP + beta-nicotinamide D-nucleotide.. Its function is as follows. DNA ligase that catalyzes the formation of phosphodiester linkages between 5'-phosphoryl and 3'-hydroxyl groups in double-stranded DNA using NAD as a coenzyme and as the energy source for the reaction. It is essential for DNA replication and repair of damaged DNA. The protein is DNA ligase of Staphylococcus aureus (strain MRSA252).